The sequence spans 303 residues: tRNA dimethylallyltransferase (303 aa).

16–23 provides a ligand contact to ATP; the sequence is GPTASGKS. 18-23 provides a ligand contact to substrate; it reads TASGKS. The interaction with substrate tRNA stretch occupies residues 41-44; the sequence is DSMQ. The disordered stretch occupies residues 141 to 161; that stretch reads AEALHGELSARDPETAGRVRP. Positions 165–169 are interaction with substrate tRNA; it reads QRIVR.

Belongs to the IPP transferase family. As to quaternary structure, monomer. Mg(2+) is required as a cofactor.

It catalyses the reaction adenosine(37) in tRNA + dimethylallyl diphosphate = N(6)-dimethylallyladenosine(37) in tRNA + diphosphate. In terms of biological role, catalyzes the transfer of a dimethylallyl group onto the adenine at position 37 in tRNAs that read codons beginning with uridine, leading to the formation of N6-(dimethylallyl)adenosine (i(6)A). This chain is tRNA dimethylallyltransferase, found in Rhizobium meliloti (strain 1021) (Ensifer meliloti).